A 688-amino-acid polypeptide reads, in one-letter code: ERI1 exoribonuclease 2 (688 aa).

Positions 37-226 (LIVVDFESTC…DDSRNTALLA (190 aa)) constitute an Exonuclease domain. Mg(2+)-binding residues include Asp41, Glu43, and Asp156. The active-site Proton acceptor is Glu43. AMP is bound at residue Glu43. His213 acts as the Proton acceptor in catalysis. His213 provides a ligand contact to AMP. Asp218 is a Mg(2+) binding site. Positions 337–360 (VDQLHSPTLNPPLTMQKPSKSDQL) are enriched in polar residues. Disordered stretches follow at residues 337 to 367 (VDQL…DSSK) and 523 to 546 (DPLL…TKRQ). Residues Cys594, Cys596, Cys619, and Cys631 each contribute to the Zn(2+) site. Residues 594–640 (CKCGRRSKRLIVSNNGPNHGKAFYCCPVGKYQQDRKCCGYFKWEQTL) form a GRF-type zinc finger.

Belongs to the ERI2 family. Mg(2+) serves as cofactor.

The polypeptide is ERI1 exoribonuclease 2 (Eri2) (Mus musculus (Mouse)).